A 603-amino-acid polypeptide reads, in one-letter code: Elongation factor 4 (603 aa).

Positions 6–188 (SKIRNFCIIA…QIVKKIPAPT (183 aa)) constitute a tr-type G domain. Residues 18 to 23 (DHGKST) and 135 to 138 (NKVD) contribute to the GTP site.

The protein belongs to the TRAFAC class translation factor GTPase superfamily. Classic translation factor GTPase family. LepA subfamily.

The protein resides in the cell membrane. It carries out the reaction GTP + H2O = GDP + phosphate + H(+). Required for accurate and efficient protein synthesis under certain stress conditions. May act as a fidelity factor of the translation reaction, by catalyzing a one-codon backward translocation of tRNAs on improperly translocated ribosomes. Back-translocation proceeds from a post-translocation (POST) complex to a pre-translocation (PRE) complex, thus giving elongation factor G a second chance to translocate the tRNAs correctly. Binds to ribosomes in a GTP-dependent manner. In Agathobacter rectalis (strain ATCC 33656 / DSM 3377 / JCM 17463 / KCTC 5835 / VPI 0990) (Eubacterium rectale), this protein is Elongation factor 4.